Here is a 414-residue protein sequence, read N- to C-terminus: Tyrosine--tRNA ligase (414 aa).

Tyr38 lines the L-tyrosine pocket. Residues 43–52 carry the 'HIGH' region motif; it reads PTAISLHLGN. L-tyrosine contacts are provided by Tyr165 and Gln169. Residues 227 to 231 carry the 'KMSKS' region motif; the sequence is KIGKS. Lys230 lines the ATP pocket. Positions 349–413 constitute an S4 RNA-binding domain; it reads DDLFLTLVDS…KGKKQYWVIY (65 aa).

Belongs to the class-I aminoacyl-tRNA synthetase family. TyrS type 1 subfamily. Homodimer.

It is found in the cytoplasm. It carries out the reaction tRNA(Tyr) + L-tyrosine + ATP = L-tyrosyl-tRNA(Tyr) + AMP + diphosphate + H(+). Functionally, catalyzes the attachment of tyrosine to tRNA(Tyr) in a two-step reaction: tyrosine is first activated by ATP to form Tyr-AMP and then transferred to the acceptor end of tRNA(Tyr). The sequence is that of Tyrosine--tRNA ligase from Mycoplasmopsis pulmonis (strain UAB CTIP) (Mycoplasma pulmonis).